The primary structure comprises 125 residues: Snaclec alboaggregin-A subunit beta (125 aa).

A C-type lectin domain is found at G1 to G125. Disulfide bonds link C4/C15, C32/C121, and C98/C113.

This sequence belongs to the snaclec family. As to quaternary structure, heterotetramer of the subunits alpha, alpha', beta and beta'; disulfide-linked. As to expression, expressed by the venom gland.

The protein resides in the secreted. Its function is as follows. Potent platelet activator that aggregates platelets via both GPIbalpha (GP1BA) and GPVI (GP6). Induces a tyrosine phosphorylation profile in platelets that resembles this produced by collagen, involving the time dependent tyrosine phosphorylation of Fc receptor gamma chain (FCGR1A), phospholipase Cgamma2 (PLCG2), and LAT. The protein is Snaclec alboaggregin-A subunit beta of Trimeresurus albolabris (White-lipped pit viper).